Consider the following 207-residue polypeptide: Cytochrome c biogenesis ATP-binding export protein CcmA (207 aa).

Positions 4 to 207 constitute an ABC transporter domain; that stretch reads LEARELLCER…RISLTQTGAA (204 aa). Residue 36 to 43 participates in ATP binding; sequence GSNGAGKT.

The protein belongs to the ABC transporter superfamily. CcmA exporter (TC 3.A.1.107) family. As to quaternary structure, the complex is composed of two ATP-binding proteins (CcmA) and two transmembrane proteins (CcmB).

It localises to the cell inner membrane. It catalyses the reaction heme b(in) + ATP + H2O = heme b(out) + ADP + phosphate + H(+). Part of the ABC transporter complex CcmAB involved in the biogenesis of c-type cytochromes; once thought to export heme, this seems not to be the case, but its exact role is uncertain. Responsible for energy coupling to the transport system. This is Cytochrome c biogenesis ATP-binding export protein CcmA from Escherichia coli O6:H1 (strain CFT073 / ATCC 700928 / UPEC).